The chain runs to 230 residues: Orotidine 5'-phosphate decarboxylase (230 aa).

Substrate contacts are provided by residues Asp-11, Lys-34, 61 to 70 (DLKLHDIPNT), Thr-117, Arg-179, Gln-188, Gly-208, and Arg-209. Residue Lys-63 is the Proton donor of the active site.

The protein belongs to the OMP decarboxylase family. Type 1 subfamily. In terms of assembly, homodimer.

The enzyme catalyses orotidine 5'-phosphate + H(+) = UMP + CO2. It functions in the pathway pyrimidine metabolism; UMP biosynthesis via de novo pathway; UMP from orotate: step 2/2. Catalyzes the decarboxylation of orotidine 5'-monophosphate (OMP) to uridine 5'-monophosphate (UMP). The protein is Orotidine 5'-phosphate decarboxylase of Streptococcus pyogenes serotype M28 (strain MGAS6180).